Consider the following 364-residue polypeptide: Probable G-protein coupled receptor AH9.4 (364 aa).

Residue M1 is a topological domain, extracellular. The helical transmembrane segment at 2–22 (AFLQSAYLVMVFTVPIAGVIL) threads the bilayer. Over 23 to 48 (NTYVLRKLIRVARKSVVRFETTSGLP) the chain is Cytoplasmic. The chain crosses the membrane as a helical span at residues 49-69 (LAAMSVGDSITLCALLMQAIF). Residues 70 to 89 (HITPKGEVPTVVLSSICKFG) lie on the Extracellular side of the membrane. Residues 90-110 (IFLIHSTSAFSVWCWFFLSVL) form a helical membrane-spanning segment. Topologically, residues 111–130 (RYIAVFHPFKYRTIWRQPRN) are cytoplasmic. Residues 131-151 (ALKFLAGAVGMFQIYTLIFVT) traverse the membrane as a helical segment. Residues 152 to 177 (YRQEEKSCGEYDVFHESAFKHVHLLD) are Extracellular-facing. Residues 178 to 198 (IFLFYAIPSLLRITLDFLVLI) form a helical membrane-spanning segment. Over 199–277 (HCYSPFSVEG…KKKTAMVMRS (79 aa)) the chain is Cytoplasmic. The helical transmembrane segment at 278–298 (ILISVLNLLLNLPSHIFRAWA) threads the bilayer. Topologically, residues 299 to 315 (SYDESSLENEIVRTLEP) are extracellular. The helical transmembrane segment at 316–336 (IAQMMYFSQFACNAFYLATSI) threads the bilayer. Residues 337 to 364 (YETNGSPRNTVISSSNRHVSRCISDDEA) are Cytoplasmic-facing.

The protein belongs to the G-protein coupled receptor 1 family.

It localises to the cell membrane. Its function is as follows. Not known. Putative receptor. The sequence is that of Probable G-protein coupled receptor AH9.4 from Caenorhabditis elegans.